The sequence spans 220 residues: Probable GTP-binding protein EngB (220 aa).

Positions 41–219 (DRSEVCFAGR…RAEIAALAML (179 aa)) constitute an EngB-type G domain. Residues 49-56 (GRSNVGKS), 76-80 (GRTRE), 96-99 (DLPG), 164-167 (TKVD), and 197-200 (MTSA) each bind GTP. Residues Ser-56 and Thr-78 each coordinate Mg(2+).

The protein belongs to the TRAFAC class TrmE-Era-EngA-EngB-Septin-like GTPase superfamily. EngB GTPase family. The cofactor is Mg(2+).

Necessary for normal cell division and for the maintenance of normal septation. The sequence is that of Probable GTP-binding protein EngB from Hyphomonas neptunium (strain ATCC 15444).